We begin with the raw amino-acid sequence, 555 residues long: Formate--tetrahydrofolate ligase (555 aa).

Position 64–71 (64–71) interacts with ATP; that stretch reads TKAGIGKT.

The protein belongs to the formate--tetrahydrofolate ligase family.

The enzyme catalyses (6S)-5,6,7,8-tetrahydrofolate + formate + ATP = (6R)-10-formyltetrahydrofolate + ADP + phosphate. It participates in one-carbon metabolism; tetrahydrofolate interconversion. The chain is Formate--tetrahydrofolate ligase from Bacteroides fragilis (strain ATCC 25285 / DSM 2151 / CCUG 4856 / JCM 11019 / LMG 10263 / NCTC 9343 / Onslow / VPI 2553 / EN-2).